The sequence spans 237 residues: Phosphoribosylaminoimidazole-succinocarboxamide synthase (237 aa).

It belongs to the SAICAR synthetase family.

It catalyses the reaction 5-amino-1-(5-phospho-D-ribosyl)imidazole-4-carboxylate + L-aspartate + ATP = (2S)-2-[5-amino-1-(5-phospho-beta-D-ribosyl)imidazole-4-carboxamido]succinate + ADP + phosphate + 2 H(+). It participates in purine metabolism; IMP biosynthesis via de novo pathway; 5-amino-1-(5-phospho-D-ribosyl)imidazole-4-carboxamide from 5-amino-1-(5-phospho-D-ribosyl)imidazole-4-carboxylate: step 1/2. The polypeptide is Phosphoribosylaminoimidazole-succinocarboxamide synthase (Salmonella arizonae (strain ATCC BAA-731 / CDC346-86 / RSK2980)).